Here is a 206-residue protein sequence, read N- to C-terminus: Cytidylate kinase (206 aa).

Position 7-15 (7-15) interacts with ATP; sequence GPAASGKGT.

This sequence belongs to the cytidylate kinase family. Type 1 subfamily.

Its subcellular location is the cytoplasm. It carries out the reaction CMP + ATP = CDP + ADP. The catalysed reaction is dCMP + ATP = dCDP + ADP. In Azorhizobium caulinodans (strain ATCC 43989 / DSM 5975 / JCM 20966 / LMG 6465 / NBRC 14845 / NCIMB 13405 / ORS 571), this protein is Cytidylate kinase.